The primary structure comprises 1086 residues: Selenocysteine insertion sequence-binding protein 2-like (1086 aa).

Disordered stretches follow at residues 155–207 (GQAF…GPDS), 243–386 (AKGR…SESL), 615–657 (QEDA…SPMA), 880–904 (SDGLEPSEMEKAAPCTHSPPEKPSR), and 919–1086 (AAGS…PQST). The span at 193–206 (NVATQKETSATGPD) shows a compositional bias: polar residues. Ser-276 is modified (phosphoserine). Polar residues-rich tracts occupy residues 294 to 303 (GTMNRLESSG) and 328 to 344 (QAFSRGGRQTEQRNNLQ). The segment covering 355–370 (SSERRQNLQKRQDNKH) has biased composition (basic and acidic residues). A compositionally biased stretch (polar residues) spans 624–657 (SDASLSPASQNSPYCMTPVSQGSPASSGIGSPMA). Residues 922–931 (SITSAPSQGK) are compositionally biased toward polar residues. Residues 933 to 943 (TGDKDELKPDD) are compositionally biased toward basic and acidic residues. Polar residues predominate over residues 947-957 (ASQQSTETGSL). The segment covering 981–994 (LEEEEDEEEEEEDY) has biased composition (acidic residues). Residues 1004 to 1022 (QLNSRIESWVSETQRTMET) are compositionally biased toward polar residues. Residues 1032–1046 (SEEDSAEQSGEEAAE) are compositionally biased toward acidic residues.

In terms of biological role, binds SECIS (Sec insertion sequence) elements present on selenocysteine (Sec) protein mRNAs, but does not promote Sec incorporation into selenoproteins. The polypeptide is Selenocysteine insertion sequence-binding protein 2-like (Secisbp2l) (Mus musculus (Mouse)).